An 87-amino-acid chain; its full sequence is U3-theraphotoxin-Hhn1l (87 aa).

An N-terminal signal peptide occupies residues 1–24; that stretch reads MVNMKASMFLTFAGLVLLFVVCYA. Positions 25-52 are excised as a propeptide; it reads SESEEKEFPKEMLSSIFAVDNDFKQEER. 3 cysteine pairs are disulfide-bonded: Cys54–Cys67, Cys61–Cys72, and Cys66–Cys79.

It belongs to the neurotoxin 10 (Hwtx-1) family. 51 (Hntx-8) subfamily. Hntx-8 sub-subfamily. As to expression, expressed by the venom gland.

It is found in the secreted. In terms of biological role, ion channel inhibitor. The chain is U3-theraphotoxin-Hhn1l from Cyriopagopus hainanus (Chinese bird spider).